Consider the following 374-residue polypeptide: 12-oxophytodienoate reductase 2 (374 aa).

Met1 bears the N-acetylmethionine mark. FMN contacts are provided by residues 33-35, Ala66, and Gln108; that span reads PLT. Substrate is bound at residue His185. The Proton donor role is filled by Tyr190. Arg237 is an FMN binding site. Arg277 is a substrate binding site. Residues 305 to 307 and 328 to 329 each bind FMN; these read AGG and GR.

It belongs to the NADH:flavin oxidoreductase/NADH oxidase family. It depends on FMN as a cofactor. Expressed at highest levels in roots and cotyledons, and at lower levels in leaves, shoots and flowers (sepals, petals, maturing siliques and developing pollen).

It is found in the cytoplasm. The enzyme catalyses (1S,2S)-OPC-8 + NADP(+) = (9S,13S,15Z)-12-oxophyto-10,15-dienoate + NADPH + H(+). It carries out the reaction a 4,5-didehydrojasmonate + NADPH + H(+) = a jasmonate + NADP(+). Its pathway is lipid metabolism; oxylipin biosynthesis. Specifically cleaves olefinic bonds in alpha,beta-unsaturated carbonyls and may be involved in detoxification or modification of these reactive compounds. May be involved in the biosynthesis or metabolism of oxylipin signaling molecules. In vitro, reduces 9R,13R-12-oxophytodienoic acid (9R,13R-OPDA) to 9R,13R-OPC-8:0, but only poorly 9S,13S-OPDA, the natural precursor of jasmonic acid (JA). Can detoxify the explosive 2,4,6-trinitrotoluene (TNT) in vitro and in vivo by catalyzing its nitroreduction to form hydroxylamino-dinitrotoluene (HADNT). Functions in an alternative and OPR3-independent pathway for JA biosynthesis. Catalyzes the NADPH-dependent reduction of 4,5-didehydrojasmonates to jasmonates. The sequence is that of 12-oxophytodienoate reductase 2 from Arabidopsis thaliana (Mouse-ear cress).